The sequence spans 156 residues: uncharacterized protein (156 aa).

Positions 10–156 constitute an N-acetyltransferase domain; sequence VAARTFPLAC…NDYVMVRELV (147 aa).

The protein belongs to the acetyltransferase family.

This is an uncharacterized protein from Mycobacterium bovis (strain ATCC BAA-935 / AF2122/97).